A 696-amino-acid chain; its full sequence is UvrABC system protein B (696 aa).

The Helicase ATP-binding domain maps to 45-434 (EGIGDGLSYQ…DEVVEQVVRP (390 aa)). Residue 58 to 65 (GVTGSGKT) participates in ATP binding. The Beta-hairpin signature appears at 111 to 134 (YYDYYQPEAYVPQRDLFIEKDSSV). The region spanning 450 to 616 (QVDDLLSEIH…GVVKRIKDII (167 aa)) is the Helicase C-terminal domain. The UVR domain maps to 647–682 (GKEIKRLEKQMLDHAKNLEFEKAAAVRDQLAKLKSQ).

Belongs to the UvrB family. In terms of assembly, forms a heterotetramer with UvrA during the search for lesions. Interacts with UvrC in an incision complex.

The protein localises to the cytoplasm. Its function is as follows. The UvrABC repair system catalyzes the recognition and processing of DNA lesions. A damage recognition complex composed of 2 UvrA and 2 UvrB subunits scans DNA for abnormalities. Upon binding of the UvrA(2)B(2) complex to a putative damaged site, the DNA wraps around one UvrB monomer. DNA wrap is dependent on ATP binding by UvrB and probably causes local melting of the DNA helix, facilitating insertion of UvrB beta-hairpin between the DNA strands. Then UvrB probes one DNA strand for the presence of a lesion. If a lesion is found the UvrA subunits dissociate and the UvrB-DNA preincision complex is formed. This complex is subsequently bound by UvrC and the second UvrB is released. If no lesion is found, the DNA wraps around the other UvrB subunit that will check the other stand for damage. This Ralstonia nicotianae (strain ATCC BAA-1114 / GMI1000) (Ralstonia solanacearum) protein is UvrABC system protein B.